Consider the following 490-residue polypeptide: GDP-fucose protein O-fucosyltransferase 2 (490 aa).

An N-terminal signal peptide occupies residues 1-25 (MRGSWPRLGFPALLLLLHLLTGSDA). 2 N-linked (GlcNAc...) asparagine glycosylation sites follow: Asn29 and Asn79. 81–85 (SEGFN) is a binding site for GDP-beta-L-fucose. The Proton acceptor role is filled by Glu82. Cys203 and Cys226 are oxidised to a cystine. Residue 336-338 (HLR) participates in GDP-beta-L-fucose binding. The N-linked (GlcNAc...) asparagine glycan is linked to Asn368. GDP-beta-L-fucose contacts are provided by residues Asp418 and 435–436 (TF). Cys459 and Cys466 are joined by a disulfide.

Belongs to the glycosyltransferase 68 family.

Its subcellular location is the endoplasmic reticulum. The protein resides in the golgi apparatus. The catalysed reaction is L-seryl-[protein] + GDP-beta-L-fucose = 3-O-(alpha-L-fucosyl)-L-seryl-[protein] + GDP + H(+). It carries out the reaction L-threonyl-[protein] + GDP-beta-L-fucose = 3-O-(alpha-L-fucosyl)-L-threonyl-[protein] + GDP + H(+). Its pathway is protein modification; protein glycosylation. Its activity is regulated as follows. Does not require divalent metal ions for optimal activity. Functionally, catalyzes the reaction that attaches fucose through an O-glycosidic linkage to a conserved serine or threonine residue in the consensus sequence C1-X-X-S/T-C2 of thrombospondin type I repeats (TSRs) where C1 and C2 are the first and second cysteines of the repeat, respectively. O-fucosylates members of several protein families including the ADAMTS, the thrombospondin (TSP) and spondin families. In Drosophila melanogaster (Fruit fly), this protein is GDP-fucose protein O-fucosyltransferase 2.